The sequence spans 473 residues: H(+)/Cl(-) exchange transporter ClcA (473 aa).

Residues 1 to 32 lie on the Cytoplasmic side of the membrane; the sequence is MKTDTSTFLAQQIVRLRRRDQIRRLMQRDKTP. Residues 33–69 form a helical membrane-spanning segment; the sequence is LAILFMAAVVGTLTGLVGVAFEKAVSWVQNMRIGALV. Over 70-76 the chain is Periplasmic; it reads QVADHAF. A helical transmembrane segment spans residues 77–100; it reads LLWPLAFILSALLAMVGYFLVRKF. The short motif at 106–110 is the Selectivity filter part_1 element; sequence GSGIP. S107 is a binding site for chloride. Residues 109–116 constitute an intramembrane region (helical); sequence IPEIEGAL. Residues 117–123 are Cytoplasmic-facing; sequence EELRPVR. The next 2 membrane-spanning stretches (helical) occupy residues 124 to 141 and 148 to 166; these read WWRVLPVKFIGGMGTLGA and EGPTVQIGGNLGRMVLDVF. The short motif at 146–150 is the Selectivity filter part_2 element; sequence GREGP. Residues 167–176 lie on the Cytoplasmic side of the membrane; sequence RMRSAEARHT. 2 intramembrane regions (helical) span residues 177-189 and 193-201; these read LLATGAAAGLSAA and PLAGILFII. Residues 202-214 lie on the Cytoplasmic side of the membrane; the sequence is EEMRPQFRYNLIS. The chain crosses the membrane as a helical span at residues 215-232; sequence IKAVFTGVIMSSIVFRIF. Residues 233–252 lie on the Periplasmic side of the membrane; that stretch reads NGEAPIIEVGKLSDAPVNTL. The helical transmembrane segment at 253 to 281 threads the bilayer; it reads WLYLILGIIFGCVGPVFNSLVLRTQDMFQ. Residues 282 to 287 lie on the Cytoplasmic side of the membrane; that stretch reads RFHGGE. The helical transmembrane segment at 288–309 threads the bilayer; it reads IKKWVLMGGAIGGLCGILGLIE. Residues 310–329 are Periplasmic-facing; the sequence is PEAAGGGFNLIPIAAAGNFS. Transmembrane regions (helical) follow at residues 330–349 and 355–376; these read VGLLLFIFITRVVTTLLCFS and GIFAPMLALGTLLGTAFGMAAA. A Selectivity filter part_3 motif is present at residues 355–359; sequence GIFAP. Residues I356 and F357 each contribute to the chloride site. The Periplasmic segment spans residues 377–386; that stretch reads VLFPQYHLEA. Residues 387–401 constitute an intramembrane region (helical); it reads GTFAIAGMGALMAAS. Positions 402–404 form an intramembrane region, note=Loop between two helices; that stretch reads VRA. Positions 405–416 form an intramembrane region, helical; the sequence is PLTGIVLVLEMT. Residues 417-421 constitute an intramembrane region (note=Loop between two helices); sequence DNYQL. The helical transmembrane segment at 422–438 threads the bilayer; the sequence is ILPMIITCLGATLLAQF. The Cytoplasmic portion of the chain corresponds to 439–473; that stretch reads LGGKPLYSTILARTLAKQDAEQAAKNQNASAGENT. Residue Y445 participates in chloride binding.

This sequence belongs to the chloride channel (TC 2.A.49) family. ClcA subfamily. In terms of assembly, homodimer.

It localises to the cell inner membrane. The enzyme catalyses 2 chloride(in) + H(+)(out) = 2 chloride(out) + H(+)(in). Its function is as follows. Proton-coupled chloride transporter. Functions as antiport system and exchanges two chloride ions for 1 proton. Probably acts as an electrical shunt for an outwardly-directed proton pump that is linked to amino acid decarboxylation, as part of the extreme acid resistance (XAR) response. The polypeptide is H(+)/Cl(-) exchange transporter ClcA (Salmonella choleraesuis (strain SC-B67)).